The following is a 61-amino-acid chain: Small ribosomal subunit protein uS14B (61 aa).

Residues C24, C27, C40, and C43 each contribute to the Zn(2+) site.

It belongs to the universal ribosomal protein uS14 family. Zinc-binding uS14 subfamily. As to quaternary structure, part of the 30S ribosomal subunit. Contacts proteins S3 and S10. Zn(2+) serves as cofactor.

In terms of biological role, binds 16S rRNA, required for the assembly of 30S particles and may also be responsible for determining the conformation of the 16S rRNA at the A site. This Bacillus velezensis (strain DSM 23117 / BGSC 10A6 / LMG 26770 / FZB42) (Bacillus amyloliquefaciens subsp. plantarum) protein is Small ribosomal subunit protein uS14B.